Reading from the N-terminus, the 860-residue chain is Pentatricopeptide repeat-containing protein At2g40720 (860 aa).

20 PPR repeats span residues 59–93, 94–124, 132–166, 167–203, 204–234, 236–270, 271–305, 306–340, 341–371, 372–406, 407–437, 438–472, 475–509, 510–540, 541–575, 576–610, 611–641, 642–676, 677–707, and 713–743; these read SVFTFPSLLKACSALTNLSYGKTIHGSVVVLGWRY, DPFIATSLVNMYVKCGFLDYAVQVFDGWSQS, DVTVWNSMIDGYFKFRRFKEGVGCFRRMLVFGVRP, DAFSLSIVVSVMCKEGNFRREEGKQIHGFMLRNSLDT, DSFLKTALIDMYFKFGLSIDAWRVFVEIEDK, NVVLWNVMIVGFGGSGICESSLDLYMLAKNNSVKL, VSTSFTGALGACSQSENSGFGRQIHCDVVKMGLHN, DPYVCTSLLSMYSKCGMVGEAETVFSCVVDKRLEI, WNAMVAAYAENDYGYSALDLFGFMRQKSVLP, DSFTLSNVISCCSVLGLYNYGKSVHAELFKRPIQS, TSTIESALLTLYSKCGCDPDAYLVFKSMEEK, DMVAWGSLISGLCKNGKFKEALKVFGDMKDDDDSL, DSDIMTSVTNACAGLEALRFGLQVHGSMIKTGLVL, NVFVGSSLIDLYSKCGLPEMALKVFTSMSTE, NMVAWNSMISCYSRNNLPELSIDLFNLMLSQGIFP, DSVSITSVLVAISSTASLLKGKSLHGYTLRLGIPS, DTHLKNALIDMYVKCGFSKYAENIFKKMQHK, SLITWNLMIYGYGSHGDCITALSLFDEMKKAGESP, DDVTFLSLISACNHSGFVEEGKNIFEFMKQD, and NMEHYANMVDLLGRAGLLEEAYSFIKAMPIE. A type E motif region spans residues 748–823; the sequence is IWLCLLSASR…QPGCSWIEVS (76 aa). Residues 824 to 854 are type E(+) motif; it reads DRTNVFFSGGSSSPMKAEIFNVLNRLKSNMV.

Belongs to the PPR family. PCMP-E subfamily.

The polypeptide is Pentatricopeptide repeat-containing protein At2g40720 (PCMP-E26) (Arabidopsis thaliana (Mouse-ear cress)).